Consider the following 394-residue polypeptide: Probable malate--CoA ligase subunit beta (394 aa).

In terms of domain architecture, ATP-grasp spans 9-244 (KELLARHGVH…KSQEDPRETF (236 aa)). The ATP site is built by Lys46, Glu99, Val102, and Glu107. Residues Asn199 and Asp213 each coordinate Mg(2+).

It belongs to the succinate/malate CoA ligase beta subunit family. As to quaternary structure, heterotetramer of two alpha and two beta subunits. The cofactor is Mg(2+).

The catalysed reaction is (S)-malate + ATP + CoA = (S)-malyl-CoA + ADP + phosphate. The protein operates within one-carbon metabolism; formaldehyde assimilation via serine pathway. The sequence is that of Probable malate--CoA ligase subunit beta (mtkA) from Mesorhizobium japonicum (strain LMG 29417 / CECT 9101 / MAFF 303099) (Mesorhizobium loti (strain MAFF 303099)).